The sequence spans 352 residues: Histidine protein kinase SaeS (352 aa).

2 helical membrane passes run 9-29 (QIIIGVISSVILTTIILVIAY) and 41-61 (TLAITTMITSCLTLSICSIFI). One can recognise a Histidine kinase domain in the interval 130–349 (NLAHDLKTPL…TMTLTLKKFQ (220 aa)). Histidine 133 bears the Phosphohistidine; by autocatalysis mark.

Post-translationally, autophosphorylated.

It localises to the cell membrane. The enzyme catalyses ATP + protein L-histidine = ADP + protein N-phospho-L-histidine.. Its function is as follows. Member of the two-component regulatory system SaeR/SaeS. Probably functions as a membrane-associated protein kinase that upon sensing the appropriate signal, autophosphorylates and in turn activates the cytosolic response regulator SaeR. This Staphylococcus epidermidis (strain ATCC 35984 / DSM 28319 / BCRC 17069 / CCUG 31568 / BM 3577 / RP62A) protein is Histidine protein kinase SaeS (saeS).